Here is a 354-residue protein sequence, read N- to C-terminus: Methionine import ATP-binding protein MetN (354 aa).

The 243-residue stretch at 8–250 (LDHIDITFHQ…PKEALTQEFI (243 aa)) folds into the ABC transporter domain. An ATP-binding site is contributed by 42-49 (GYSGAGKS).

The protein belongs to the ABC transporter superfamily. Methionine importer (TC 3.A.1.24) family. In terms of assembly, the complex is composed of two ATP-binding proteins (MetN), two transmembrane proteins (MetI) and a solute-binding protein (MetQ).

The protein localises to the cell membrane. The catalysed reaction is L-methionine(out) + ATP + H2O = L-methionine(in) + ADP + phosphate + H(+). It catalyses the reaction D-methionine(out) + ATP + H2O = D-methionine(in) + ADP + phosphate + H(+). Its function is as follows. Part of the ABC transporter complex MetNIQ involved in methionine import. Responsible for energy coupling to the transport system. In Streptococcus pyogenes serotype M4 (strain MGAS10750), this protein is Methionine import ATP-binding protein MetN.